The primary structure comprises 358 residues: DnaJ homolog subfamily B member 11 (358 aa).

The N-terminal stretch at 1–22 (MAPQNLSTFCLLLLYLIGTVIA) is a signal peptide. The 66-residue stretch at 25–90 (DFYKILGVPR…EKRKQYDTYG (66 aa)) folds into the J domain. A Phosphothreonine modification is found at Thr188. Residue Asn261 is glycosylated (N-linked (GlcNAc...) asparagine).

As to quaternary structure, part of a large chaperone multiprotein complex comprising DNAJB11, HSP90B1, HSPA5, HYOU, PDIA2, PDIA4, PDIA6, PPIB, SDF2L1, UGGT1 and very small amounts of ERP29, but not, or at very low levels, CALR nor CANX. Binds to denatured substrates in an ATP-independent manner. Interacts via the J domain with HSPA5 in an ATP-dependent manner. In terms of processing, contains high-mannose Endo H-sensitive carbohydrates. Cys-169, Cys-171, Cys-193 and Cys-196 form intramolecular disulfide bonds. The preferential partner for each Cys is not known.

The protein localises to the endoplasmic reticulum lumen. Its function is as follows. As a co-chaperone for HSPA5 it is required for proper folding, trafficking or degradation of proteins. Binds directly to both unfolded proteins that are substrates for ERAD and nascent unfolded peptide chains, but dissociates from the HSPA5-unfolded protein complex before folding is completed. May help recruiting HSPA5 and other chaperones to the substrate. Stimulates HSPA5 ATPase activity. It is necessary for maturation and correct trafficking of PKD1. This chain is DnaJ homolog subfamily B member 11 (Dnajb11), found in Mus musculus (Mouse).